Here is a 276-residue protein sequence, read N- to C-terminus: Small ribosomal subunit protein uS3 (276 aa).

A KH type-2 domain is found at isoleucine 39–lysine 110.

It belongs to the universal ribosomal protein uS3 family. In terms of assembly, part of the 30S ribosomal subunit. Forms a tight complex with proteins S10 and S14.

In terms of biological role, binds the lower part of the 30S subunit head. Binds mRNA in the 70S ribosome, positioning it for translation. This Borrelia recurrentis (strain A1) protein is Small ribosomal subunit protein uS3.